Here is a 464-residue protein sequence, read N- to C-terminus: Cysteine--tRNA ligase (464 aa).

Cysteine 29 contributes to the Zn(2+) binding site. The 'HIGH' region signature appears at 31–41 (ATVQGVPHIGH). The interval 160–180 (RLDEVQQGESTASGKRDPRDF) is disordered. 3 residues coordinate Zn(2+): cysteine 208, histidine 233, and glutamate 237. Residues 264–268 (KMSKS) carry the 'KMSKS' region motif. Lysine 267 provides a ligand contact to ATP.

The protein belongs to the class-I aminoacyl-tRNA synthetase family. As to quaternary structure, monomer. It depends on Zn(2+) as a cofactor.

The protein localises to the cytoplasm. It carries out the reaction tRNA(Cys) + L-cysteine + ATP = L-cysteinyl-tRNA(Cys) + AMP + diphosphate. The chain is Cysteine--tRNA ligase from Saccharopolyspora erythraea (strain ATCC 11635 / DSM 40517 / JCM 4748 / NBRC 13426 / NCIMB 8594 / NRRL 2338).